The primary structure comprises 501 residues: Probable cytosol aminopeptidase (501 aa).

Lys-268 and Asp-273 together coordinate Mn(2+). The active site involves Lys-280. Asp-291, Asp-350, and Glu-352 together coordinate Mn(2+). The active site involves Arg-354.

This sequence belongs to the peptidase M17 family. Mn(2+) serves as cofactor.

The protein localises to the cytoplasm. It carries out the reaction Release of an N-terminal amino acid, Xaa-|-Yaa-, in which Xaa is preferably Leu, but may be other amino acids including Pro although not Arg or Lys, and Yaa may be Pro. Amino acid amides and methyl esters are also readily hydrolyzed, but rates on arylamides are exceedingly low.. The catalysed reaction is Release of an N-terminal amino acid, preferentially leucine, but not glutamic or aspartic acids.. In terms of biological role, presumably involved in the processing and regular turnover of intracellular proteins. Catalyzes the removal of unsubstituted N-terminal amino acids from various peptides. This Idiomarina loihiensis (strain ATCC BAA-735 / DSM 15497 / L2-TR) protein is Probable cytosol aminopeptidase.